The primary structure comprises 413 residues: Multidrug resistance protein MdtA (413 aa).

The first 20 residues, 1-20, serve as a signal peptide directing secretion; it reads MKGSNTFRWAIAIGVVVAAA. Disordered regions lie at residues 31-57 and 391-413; these read SPTA…RDGP and EPQT…GARA. Over residues 32–49 the composition is skewed to low complexity; it reads PTAAPGVAAQAQHTAAAG. The span at 397–413 shows a compositional bias: basic and acidic residues; it reads ADEKSPSRHEGQKGARA.

This sequence belongs to the membrane fusion protein (MFP) (TC 8.A.1) family. Part of a tripartite efflux system composed of MdtA, MdtB and MdtC.

It is found in the cell inner membrane. The protein is Multidrug resistance protein MdtA of Salmonella typhi.